The primary structure comprises 349 residues: Phloroglucinol synthase (349 aa).

Residue cysteine 138 is part of the active site.

The protein belongs to the thiolase-like superfamily. Chalcone/stilbene synthases family.

It catalyses the reaction 3 malonyl-CoA + 3 H(+) = 1,3,5-trihydroxybenzene + 3 CO2 + 3 CoA. Its pathway is antibiotic biosynthesis. Type III polyketide synthase that catalyzes the synthesis of phloroglucinol from three molecules of malonyl-CoA. In addition to its ability to produce phloroglucinol from malonyl-CoA, it exhibits broad substrate specificity, accepting C4-C12 aliphatic acyl-CoAs and phenylacetyl-CoA as the starters to form C6-polyoxoalkylated alpha-pyrones from sequential condensation with malonyl-CoA. This chain is Phloroglucinol synthase, found in Pseudomonas fluorescens (strain ATCC BAA-477 / NRRL B-23932 / Pf-5).